The primary structure comprises 533 residues: DNA-directed RNA polymerase III subunit RPC3 (533 aa).

The residue at position 194 (Ser194) is a Phosphoserine. The segment at 197 to 230 (GKGKRRRSSDEDATGEPKAKRPKQTTDNKEPIPD) is disordered. Positions 211–228 (GEPKAKRPKQTTDNKEPI) are enriched in basic and acidic residues.

It belongs to the eukaryotic RPC3/POLR3C RNA polymerase subunit family. As to quaternary structure, component of the RNA polymerase III complex consisting of 17 subunits: a ten-subunit horseshoe-shaped catalytic core composed of POLR3A/RPC1, POLR3B/RPC2, POLR1C/RPAC1, POLR1D/RPAC2, POLR3K/RPC10, POLR2E/RPABC1, POLR2F/RPABC2, POLR2H/RPABC3, POLR2K/RPABC4 and POLR2L/RPABC5; a mobile stalk composed of two subunits POLR3H/RPC8 and CRCP/RPC9, protruding from the core and functioning primarily in transcription initiation; and additional subunits homologous to general transcription factors of the RNA polymerase II machinery, POLR3C/RPC3-POLR3F/RPC6-POLR3G/RPC7 heterotrimer required for transcription initiation and POLR3D/RPC4-POLR3E/RPC5 heterodimer involved in both transcription initiation and termination. Directly interacts with POLR3G/RPC7 and POLR3GL. Directly interacts with POLR3F/RPC6. Interacts with GTF3C4. As part of the RNA polymerase III complex, interacts with PKP2.

Its subcellular location is the nucleus. Its function is as follows. DNA-dependent RNA polymerase catalyzes the transcription of DNA into RNA using the four ribonucleoside triphosphates as substrates. Specific peripheric component of RNA polymerase III (Pol III) which synthesizes small non-coding RNAs including 5S rRNA, snRNAs, tRNAs and miRNAs from at least 500 distinct genomic loci. Part of POLR3C/RPC3-POLR3F/RPC6-POLR3G/RPC7 heterotrimer, coordinates the dynamics of Pol III stalk and clamp modules during the transition from apo to elongation state. Pol III plays a key role in sensing and limiting infection by intracellular bacteria and DNA viruses. Acts as a nuclear and cytosolic DNA sensor involved in innate immune response. Can sense non-self dsDNA that serves as template for transcription into dsRNA. The non-self RNA polymerase III transcripts, such as Epstein-Barr virus-encoded RNAs (EBERs) induce type I interferon and NF-kappa-B through the RIG-I pathway. Preferentially binds single-stranded DNA (ssDNA) in a sequence-independent manner. This is DNA-directed RNA polymerase III subunit RPC3 (POLR3C) from Bos taurus (Bovine).